We begin with the raw amino-acid sequence, 300 residues long: uncharacterized protein (300 aa).

An N-terminal signal peptide occupies residues 1–19 (MKLKLLLIPLLGSSLLLSA). Cys-20 carries the N-palmitoyl cysteine lipid modification. Cys-20 carries S-diacylglycerol cysteine lipidation.

It belongs to the MG439/MG440 family.

The protein resides in the cell membrane. This is an uncharacterized protein from Mycoplasma pneumoniae (strain ATCC 29342 / M129 / Subtype 1) (Mycoplasmoides pneumoniae).